The sequence spans 380 residues: Cystathionine gamma-synthase (380 aa).

Residue lysine 195 is modified to N6-(pyridoxal phosphate)lysine.

The protein belongs to the trans-sulfuration enzymes family. In terms of assembly, homotetramer. Pyridoxal 5'-phosphate is required as a cofactor.

It is found in the cytoplasm. It catalyses the reaction O-succinyl-L-homoserine + L-cysteine = L,L-cystathionine + succinate + H(+). Functionally, catalyzes the formation of L-cystathionine from O-succinyl-L-homoserine (OSHS) and L-cysteine, via a gamma-replacement reaction. In the absence of thiol, catalyzes gamma-elimination to form 2-oxobutanoate, succinate and ammonia. This is Cystathionine gamma-synthase (metB) from Helicobacter pylori (strain ATCC 700392 / 26695) (Campylobacter pylori).